A 158-amino-acid chain; its full sequence is C-type lectin (158 aa).

The signal sequence occupies residues 1-23 (MGHFTFISLCLMPIFLSLSGAEC). 4 disulfides stabilise this stretch: Cys-26-Cys-37, Cys-54-Cys-154, Cys-61-Cys-156, and Cys-129-Cys-146. The C-type lectin domain occupies 33-155 (RNGLCYKLFD…CESLFAFICR (123 aa)). N-linked (GlcNAc...) asparagine glycosylation is found at Asn-111 and Asn-121. Residues 119-121 (EPN) carry the Mannose-binding motif. Ca(2+) contacts are provided by Glu-127, Asn-142, and Asp-143.

It belongs to the true venom lectin family. Homodimer; non-covalently linked. In terms of tissue distribution, expressed by the venom gland.

Its subcellular location is the secreted. Its function is as follows. Mannose-binding lectin which recognizes specific carbohydrate structures and agglutinates a variety of animal cells by binding to cell-surface glycoproteins and glycolipids. May be a calcium-dependent lectin. The sequence is that of C-type lectin from Micrurus corallinus (Brazilian coral snake).